The primary structure comprises 619 residues: Dihydroxy-acid dehydratase (619 aa).

D81 lines the Mg(2+) pocket. Residue C122 coordinates [2Fe-2S] cluster. 2 residues coordinate Mg(2+): D123 and K124. K124 bears the N6-carboxylysine mark. C195 is a binding site for [2Fe-2S] cluster. E492 provides a ligand contact to Mg(2+). S518 functions as the Proton acceptor in the catalytic mechanism.

The protein belongs to the IlvD/Edd family. As to quaternary structure, homodimer. It depends on [2Fe-2S] cluster as a cofactor. Requires Mg(2+) as cofactor.

The enzyme catalyses (2R)-2,3-dihydroxy-3-methylbutanoate = 3-methyl-2-oxobutanoate + H2O. It carries out the reaction (2R,3R)-2,3-dihydroxy-3-methylpentanoate = (S)-3-methyl-2-oxopentanoate + H2O. The protein operates within amino-acid biosynthesis; L-isoleucine biosynthesis; L-isoleucine from 2-oxobutanoate: step 3/4. It participates in amino-acid biosynthesis; L-valine biosynthesis; L-valine from pyruvate: step 3/4. In terms of biological role, functions in the biosynthesis of branched-chain amino acids. Catalyzes the dehydration of (2R,3R)-2,3-dihydroxy-3-methylpentanoate (2,3-dihydroxy-3-methylvalerate) into 2-oxo-3-methylpentanoate (2-oxo-3-methylvalerate) and of (2R)-2,3-dihydroxy-3-methylbutanoate (2,3-dihydroxyisovalerate) into 2-oxo-3-methylbutanoate (2-oxoisovalerate), the penultimate precursor to L-isoleucine and L-valine, respectively. The protein is Dihydroxy-acid dehydratase of Synechococcus elongatus (strain ATCC 33912 / PCC 7942 / FACHB-805) (Anacystis nidulans R2).